The following is a 361-amino-acid chain: MKRAYNFNAGPSALPTEVLEKAQSELLDFENTGMSVMELSHRSKEYENVHHTAAQLLRDLLNIPEDYDVLFLQGGASLQFAMIPLNFLDEGKVANYILTGSWSEKALKEAKFIGKTAIAGSTKESNYTFIPDISSLQYNEHDSYVHLTSNNTIFGTQWHTYPSVSHAPLIVDMSSDILSRPLPVKNFDLIYAGAQKNLGPSGVTVVIIRKELLKRNVDHVPTMLRYQTHAEKQSLYNTPPTFGIYMLKEVLQWLKNIGGTEQIAERNQTKANLIYGAIDESEQFYKGHATKESRSLMNVTFTLPTEELTQQFLSEAKEKGFVGLNGHRSVGGCRASIYNGVPVEACEALADFMHSFYQTHR.

Arg-42 serves as a coordination point for L-glutamate. Residues 76–77, Trp-102, Thr-152, Asp-172, and Gln-195 contribute to the pyridoxal 5'-phosphate site; that span reads AS. Residue Lys-196 is modified to N6-(pyridoxal phosphate)lysine. 237 to 238 contributes to the pyridoxal 5'-phosphate binding site; the sequence is NT.

The protein belongs to the class-V pyridoxal-phosphate-dependent aminotransferase family. SerC subfamily. As to quaternary structure, homodimer. Requires pyridoxal 5'-phosphate as cofactor.

The protein localises to the cytoplasm. The catalysed reaction is O-phospho-L-serine + 2-oxoglutarate = 3-phosphooxypyruvate + L-glutamate. It catalyses the reaction 4-(phosphooxy)-L-threonine + 2-oxoglutarate = (R)-3-hydroxy-2-oxo-4-phosphooxybutanoate + L-glutamate. It functions in the pathway amino-acid biosynthesis; L-serine biosynthesis; L-serine from 3-phospho-D-glycerate: step 2/3. Catalyzes the reversible conversion of 3-phosphohydroxypyruvate to phosphoserine and of 3-hydroxy-2-oxo-4-phosphonooxybutanoate to phosphohydroxythreonine. This chain is Phosphoserine aminotransferase, found in Halalkalibacterium halodurans (strain ATCC BAA-125 / DSM 18197 / FERM 7344 / JCM 9153 / C-125) (Bacillus halodurans).